We begin with the raw amino-acid sequence, 261 residues long: 3-deoxy-manno-octulosonate cytidylyltransferase (261 aa).

It belongs to the KdsB family.

It is found in the cytoplasm. It carries out the reaction 3-deoxy-alpha-D-manno-oct-2-ulosonate + CTP = CMP-3-deoxy-beta-D-manno-octulosonate + diphosphate. It functions in the pathway nucleotide-sugar biosynthesis; CMP-3-deoxy-D-manno-octulosonate biosynthesis; CMP-3-deoxy-D-manno-octulosonate from 3-deoxy-D-manno-octulosonate and CTP: step 1/1. The protein operates within bacterial outer membrane biogenesis; lipopolysaccharide biosynthesis. Its function is as follows. Activates KDO (a required 8-carbon sugar) for incorporation into bacterial lipopolysaccharide in Gram-negative bacteria. This is 3-deoxy-manno-octulosonate cytidylyltransferase from Dechloromonas aromatica (strain RCB).